The chain runs to 1685 residues: Phosphatidylinositol 4-phosphate 3-kinase C2 domain-containing subunit alpha (1685 aa).

2 disordered regions span residues 1-33 and 41-60; these read MAQI…EALQ and KLQK…LSSS. An N-acetylalanine modification is found at Ala-2. An interaction with clathrin; sufficient to induce clathrin assembly region spans residues 2 to 142; that stretch reads AQISSNSGFK…FRPTIQRGQW (141 aa). Positions 19–31 are enriched in basic and acidic residues; it reads EPTRAKDVDKEEA. Polar residues predominate over residues 49-60; it reads TDNQRGFELSSS. Residues Ser-60, Ser-108, Ser-259, Ser-327, and Ser-338 each carry the phosphoserine modification. Residues 419 to 507 enclose the PI3K-RBD domain; the sequence is NASVKVSIDI…DTEIRLQLLT (89 aa). Ser-628 bears the Phosphoserine mark. The C2 PI3K-type domain occupies 680–839; it reads TTEQLQFTIF…ERIVLQVDFP (160 aa). A PIK helical domain is found at 859 to 1035; that stretch reads QHNLETLEND…EHVLGALLSV (177 aa). One can recognise a PI3K/PI4K catalytic domain in the interval 1103–1381; that stretch reads SIKSCSFFSS…LIESSLGSIA (279 aa). The G-loop stretch occupies residues 1109-1115; that stretch reads FFSSNAV. The segment at 1245 to 1253 is catalytic loop; that stretch reads GICDRHNDN. Positions 1264 to 1290 are activation loop; sequence HIDFGKFLGHAQMFGTFKRDRAPFVLT. The region spanning 1420–1536 is the PX domain; it reads GRIKEVSVFT…TFFHPLLRDE (117 aa). Positions 1486 to 1491 are interaction with PtdIns(4,5)P2-containing membranes; the sequence is RMVLGR. Position 1551 is a phosphoserine (Ser-1551). One can recognise a C2 domain in the interval 1554-1677; that stretch reads TPGQIGGAVK…NLSKETVKWY (124 aa). The Nuclear localization signal signature appears at 1607–1618; the sequence is SKRKTKISRKTR.

This sequence belongs to the PI3/PI4-kinase family. In terms of assembly, part of a complex with ERBB2 and EGFR. Interacts with clathrin trimers. Interacts with SBF2/MTMR13. The cofactor is Ca(2+). Requires Mg(2+) as cofactor. Phosphorylated on Ser-259 during mitosis and upon UV irradiation; which does not change enzymatic activity but leads to proteasomal degradation. Phosphorylated upon insulin stimulation; which may lead to enzyme activation.

It localises to the cell membrane. The protein localises to the cytoplasmic vesicle. It is found in the clathrin-coated vesicle. Its subcellular location is the nucleus. The protein resides in the cytoplasm. It localises to the golgi apparatus. The protein localises to the trans-Golgi network. The catalysed reaction is a 1,2-diacyl-sn-glycero-3-phospho-(1D-myo-inositol 4-phosphate) + ATP = a 1,2-diacyl-sn-glycero-3-phospho-(1D-myo-inositol-3,4-bisphosphate) + ADP + H(+). The enzyme catalyses a 1,2-diacyl-sn-glycero-3-phospho-(1D-myo-inositol) + ATP = a 1,2-diacyl-sn-glycero-3-phospho-(1D-myo-inositol-3-phosphate) + ADP + H(+). It carries out the reaction a 1,2-diacyl-sn-glycero-3-phospho-(1D-myo-inositol-4,5-bisphosphate) + ATP = a 1,2-diacyl-sn-glycero-3-phospho-(1D-myo-inositol-3,4,5-trisphosphate) + ADP + H(+). With respect to regulation, only slightly inhibited by wortmannin and LY294002. Activated by clathrin and insulin. Generates phosphatidylinositol 3-phosphate (PtdIns3P) and phosphatidylinositol 3,4-bisphosphate (PtdIns(3,4)P2) that act as second messengers. Has a role in several intracellular trafficking events. Functions in insulin signaling and secretion. Required for translocation of the glucose transporter SLC2A4/GLUT4 to the plasma membrane and glucose uptake in response to insulin-mediated RHOQ activation. Regulates insulin secretion through two different mechanisms: involved in glucose-induced insulin secretion downstream of insulin receptor in a pathway that involves AKT1 activation and TBC1D4/AS160 phosphorylation, and participates in the late step of insulin granule exocytosis probably in insulin granule fusion. Synthesizes PtdIns3P in response to insulin signaling. Functions in clathrin-coated endocytic vesicle formation and distribution. Regulates dynamin-independent endocytosis, probably by recruiting EEA1 to internalizing vesicles. In neurosecretory cells synthesizes PtdIns3P on large dense core vesicles. Participates in calcium induced contraction of vascular smooth muscle by regulating myosin light chain (MLC) phosphorylation through a mechanism involving Rho kinase-dependent phosphorylation of the MLCP-regulatory subunit MYPT1. May play a role in the EGF signaling cascade. May be involved in mitosis and UV-induced damage response. Required for maintenance of normal renal structure and function by supporting normal podocyte function. Involved in the regulation of ciliogenesis and trafficking of ciliary components. This chain is Phosphatidylinositol 4-phosphate 3-kinase C2 domain-containing subunit alpha (PIK3C2A), found in Pongo abelii (Sumatran orangutan).